Reading from the N-terminus, the 1059-residue chain is Zinc finger protein 628 (1059 aa).

6 consecutive C2H2-type zinc fingers follow at residues tyrosine 36–histidine 58, tyrosine 64–histidine 86, tyrosine 92–histidine 114, phenylalanine 120–histidine 142, tyrosine 148–histidine 170, and tyrosine 176–histidine 198. The residue at position 199 (threonine 199) is a Phosphothreonine. Residues phenylalanine 204–histidine 226 form a C2H2-type 7 zinc finger. 3 disordered regions span residues histidine 226–glycine 247, leucine 260–proline 280, and glutamate 312–alanine 351. Positions alanine 228 to alanine 237 are enriched in low complexity. Residues histidine 263–valine 279 show a composition bias toward pro residues. Low complexity predominate over residues proline 323 to alanine 335. Positions aspartate 336–alanine 351 are enriched in pro residues. 7 C2H2-type zinc fingers span residues phenylalanine 356–histidine 378, phenylalanine 386–histidine 408, tyrosine 454–histidine 476, tyrosine 482–histidine 504, phenylalanine 510–histidine 532, tyrosine 538–histidine 560, and histidine 566–histidine 588. Residue threonine 589 is modified to Phosphothreonine. 2 consecutive C2H2-type zinc fingers follow at residues phenylalanine 594 to histidine 616 and phenylalanine 622 to histidine 644. The span at histidine 644–alanine 658 shows a compositional bias: low complexity. The segment at histidine 644–alanine 674 is disordered. 4 tandem repeats follow at residues valine 818–threonine 831, valine 832–threonine 842, valine 843–threonine 853, and valine 854–threonine 864. A 4 X approximate tandem repeats region spans residues valine 818–threonine 864. The segment at aspartate 943–phenylalanine 1059 is interaction with TAF4B.

As to quaternary structure, interacts with TAF4B.

It localises to the nucleus. Transcriptional activator. Binds DNA on GT-box consensus sequence 5'-TTGGTT-3'. Plays a role in spermiogenesis. In Homo sapiens (Human), this protein is Zinc finger protein 628 (ZNF628).